The following is a 975-amino-acid chain: Monofunctional C1-tetrahydrofolate synthase, mitochondrial (975 aa).

A mitochondrion-targeting transit peptide spans 1–30 (MSARLPFVLRRLARPQHPGSPRRLPSLCRA). Positions 13 to 45 (ARPQHPGSPRRLPSLCRASSGRGSGCGGGEGLL) are disordered. Positions 31 to 345 (SSGRGSGCGG…REQQHRRWRL (315 aa)) are methylenetetrahydrofolate dehydrogenase and cyclohydrolase. The segment covering 34–44 (RGSGCGGGEGL) has biased composition (gly residues). Lys-187 is modified (N6-acetyllysine; alternate). Lys-187 carries the post-translational modification N6-succinyllysine; alternate. Positions 346–975 (HCLKLQPLSP…TETEQVKGLF (630 aa)) are formyltetrahydrofolate synthetase. At Ser-354 the chain carries Phosphoserine. ATP is bound at residue 420–427 (TPLGEGKS). At Lys-593 the chain carries N6-succinyllysine.

This sequence in the N-terminal section; belongs to the tetrahydrofolate dehydrogenase/cyclohydrolase family. It in the C-terminal section; belongs to the formate--tetrahydrofolate ligase family. As to quaternary structure, homodimer.

It is found in the mitochondrion. It catalyses the reaction (6S)-5,6,7,8-tetrahydrofolate + formate + ATP = (6R)-10-formyltetrahydrofolate + ADP + phosphate. The protein operates within one-carbon metabolism; tetrahydrofolate interconversion. Its function is as follows. May provide the missing metabolic reaction required to link the mitochondria and the cytoplasm in the mammalian model of one-carbon folate metabolism complementing thus the enzymatic activities of MTHFD2. The chain is Monofunctional C1-tetrahydrofolate synthase, mitochondrial (MTHFD1L) from Bos taurus (Bovine).